Reading from the N-terminus, the 368-residue chain is Germination protease (368 aa).

A propeptide spanning residues 1-16 (MEKKKLDLSQYAVRTD) is cleaved from the precursor.

The protein belongs to the peptidase A25 family. Homotetramer. Post-translationally, autoproteolytically processed. The inactive tetrameric zymogen termed p46 autoprocesses to a smaller form termed p41, which is active only during spore germination.

It catalyses the reaction Endopeptidase action with P4 Glu or Asp, P1 preferably Glu &gt; Asp, P1' hydrophobic and P2' Ala.. Initiates the rapid degradation of small, acid-soluble proteins during spore germination. In Bacillus licheniformis (strain ATCC 14580 / DSM 13 / JCM 2505 / CCUG 7422 / NBRC 12200 / NCIMB 9375 / NCTC 10341 / NRRL NRS-1264 / Gibson 46), this protein is Germination protease.